The following is a 506-amino-acid chain: 2,3-bisphosphoglycerate-independent phosphoglycerate mutase (506 aa).

Mn(2+)-binding residues include D13 and S63. S63 acts as the Phosphoserine intermediate in catalysis. Residues H124, 153-154 (RD), R183, R189, 255-258 (RADR), and K331 contribute to the substrate site. Positions 397, 401, 438, 439, and 457 each coordinate Mn(2+).

It belongs to the BPG-independent phosphoglycerate mutase family. Monomer. Mn(2+) serves as cofactor.

It carries out the reaction (2R)-2-phosphoglycerate = (2R)-3-phosphoglycerate. The protein operates within carbohydrate degradation; glycolysis; pyruvate from D-glyceraldehyde 3-phosphate: step 3/5. Its function is as follows. Catalyzes the interconversion of 2-phosphoglycerate and 3-phosphoglycerate. In Ruegeria sp. (strain TM1040) (Silicibacter sp.), this protein is 2,3-bisphosphoglycerate-independent phosphoglycerate mutase.